Reading from the N-terminus, the 295-residue chain is MLEKQNSEENIELLRAMRYCYNKSKIFYAVRISISILIPILSISIYLFNRGSTGTSNTGVWFSVIGSIWLLIAYQIEKLEGGYIEKGAKIQEKFDINLFNIRWNNVLVGNQISPEDIRDFSSKFKGDEEKLKNWYGGLSSKHFYVNVILAQRSNLMWAISLKRNFSILLFTVSVLYLFLTIAFGFFVNMSMQEYIIKILLPSMSILIYGFKTSDELKKQSNKLEALGNSIISKFDTGNLSEINASACREYQDAIFVYNRIRSILIPEWLYWLRQQKDDEKMIQINIRLTKKSNLF.

Transmembrane regions (helical) follow at residues 26-46, 56-76, 167-187, and 190-210; these read IFYA…ISIY, SNTG…AYQI, ILLF…GFFV, and SMQE…IYGF.

It localises to the cell membrane. In terms of biological role, effector protein of a CBASS antiviral system. CBASS (cyclic oligonucleotide-based antiphage signaling system) provides immunity against bacteriophage. The CD-NTase protein synthesizes cyclic nucleotides in response to infection; these serve as specific second messenger signals. The signals activate a diverse range of effectors, leading to bacterial cell death and thus abortive phage infection. A type I-B CBASS system. Its function is as follows. Protects B.subtilis against phage infection. When IK1_05630 and IK1_05631 are introduced in B.subtilis BEST7003 there is 1000-fold protection against phage SBSphiC. Both genes are required for protection. Activation leads to bacterial cell lysis and death, which occurs before the phage has finished its replication cycle, thus protecting non-infected bacteria by aborting the phage infection and preventing its propagation. The chain is Probable CBASS effector molecule IK1_05631 from Bacillus cereus (strain VD146).